The following is a 368-amino-acid chain: 3-dehydroquinate synthase (368 aa).

NAD(+)-binding positions include 69-74 (DGEAYK), 103-107 (GVIGD), 127-128 (TT), Lys-140, and Lys-149. Glu-182, His-245, and His-262 together coordinate Zn(2+).

It belongs to the sugar phosphate cyclases superfamily. Dehydroquinate synthase family. Requires Co(2+) as cofactor. Zn(2+) is required as a cofactor. The cofactor is NAD(+).

It localises to the cytoplasm. It carries out the reaction 7-phospho-2-dehydro-3-deoxy-D-arabino-heptonate = 3-dehydroquinate + phosphate. It participates in metabolic intermediate biosynthesis; chorismate biosynthesis; chorismate from D-erythrose 4-phosphate and phosphoenolpyruvate: step 2/7. Its function is as follows. Catalyzes the conversion of 3-deoxy-D-arabino-heptulosonate 7-phosphate (DAHP) to dehydroquinate (DHQ). This is 3-dehydroquinate synthase from Pseudomonas aeruginosa (strain UCBPP-PA14).